Here is a 1220-residue protein sequence, read N- to C-terminus: Protein patched homolog 1 (1220 aa).

Residues 1–27 are disordered; it reads MASDPRDPGPAGGVFGDLPPSYTRSPP. At 1-84 the chain is on the cytoplasmic side; sequence MASDPRDPGP…GCHIQRHCGK (84 aa). The chain crosses the membrane as a helical span at residues 85-105; the sequence is VLFIGLLVFGALSVGLRVAAI. At 106 to 419 the chain is on the extracellular side; that stretch reads ETDIEKLWVE…LNDIMKSFSD (314 aa). N-linked (GlcNAc...) asparagine glycosylation occurs at N397. Residues 420–440 form a helical membrane-spanning segment; sequence VSVIRVAGGYLLMLAYACVTM. Residues 421-579 form the SSD domain; it reads SVIRVAGGYL…LLIFPAILSL (159 aa). Residues 441-449 lie on the Cytoplasmic side of the membrane; sequence LRWDCAKSQ. Residues 450–470 form a helical membrane-spanning segment; the sequence is GAVGLAGVLLVALSVAAGLGL. At 471 to 484 the chain is on the extracellular side; the sequence is CSLLGLSFNAATTQ. Residues 485–505 form a helical membrane-spanning segment; sequence VLPSLALGIGVDDMFLLGHSF. Topologically, residues 506-528 are cytoplasmic; sequence TETRSNIPFKERTGDCLRRTGTS. A helical membrane pass occupies residues 529-549; sequence VALTSVNNMIAFFMAALVPIP. At 550 to 558 the chain is on the extracellular side; sequence ALRAFSLQA. Residues 559–579 traverse the membrane as a helical segment; that stretch reads AVVVVFNFAMALLIFPAILSL. The Cytoplasmic segment spans residues 580–739; it reads DLHRREDKRL…APLLLKPETK (160 aa). Residues 740-760 form a helical membrane-spanning segment; the sequence is TVVVVVFVALLSLSLYGTTMV. Residues 761–1016 are Extracellular-facing; sequence HDGLYLTDIV…WEQYIGLRHW (256 aa). N-linked (GlcNAc...) asparagine glycosylation is found at N865 and N888. A helical membrane pass occupies residues 1017-1037; that stretch reads FLLSISVVLACTFLVCAILLL. Topologically, residues 1038–1044 are cytoplasmic; that stretch reads NPWTAGV. The helical transmembrane segment at 1045–1065 threads the bilayer; the sequence is IVFILPMMTVELFGIMGLIGI. Residues 1066–1072 are Extracellular-facing; sequence KLSAIPV. Residues 1073 to 1093 traverse the membrane as a helical segment; that stretch reads VILIASVGIGVEFTVHIALGF. The Cytoplasmic segment spans residues 1094 to 1110; that stretch reads LTAIGDRNTRSAVAMEH. Residues 1111–1131 form a helical membrane-spanning segment; it reads MFAPVIDGAISTLLGVLMLAG. Over 1132 to 1143 the chain is Extracellular; sequence SEFDFIMRYFFA. Residues 1144 to 1164 traverse the membrane as a helical segment; it reads VLAILTLLGILNGLVLLPVLL. Topologically, residues 1165 to 1220 are cytoplasmic; sequence SLMGPPAEVVPANNANHLQSPSPEPMPPPMNHHGYYAGHIPKASHQAFSETSDSEY.

Belongs to the patched family. Post-translationally, glycosylation is necessary for SHH binding. Detected in embryonic presomitic mesoderm, neuroectoderm, tissue surrounding the notochord, ventral neural tube.

The protein localises to the membrane. In terms of biological role, acts as a receptor for sonic hedgehog (SHH), indian hedgehog (IHH) and desert hedgehog (DHH). Associates with the smoothened protein (SMO) to transduce the hedgehog's proteins signal. In Danio rerio (Zebrafish), this protein is Protein patched homolog 1 (ptch1).